The following is a 342-amino-acid chain: SH3 domain-containing YSC84-like protein 1 (342 aa).

The segment at 218–266 (GQRINARKAAREQRKSSAKELPPKPLSRPQQSSAPVQLNSGSQSNRNEY) is disordered. The span at 226–239 (AAREQRKSSAKELP) shows a compositional bias: basic and acidic residues. Residues 245 to 263 (RPQQSSAPVQLNSGSQSNR) are compositionally biased toward polar residues. Residues 283 to 342 (NQPIEVTALYSFEGQQPGDLNFQAGDRITVISKTDSHFDWWEGKLRGQTGIFPANYVTMN) enclose the SH3 domain.

The protein belongs to the SH3YL1 family. Interacts with SH3D19.

The polypeptide is SH3 domain-containing YSC84-like protein 1 (SH3YL1) (Homo sapiens (Human)).